Here is a 386-residue protein sequence, read N- to C-terminus: Succinate--CoA ligase [ADP-forming] subunit beta (386 aa).

An ATP-grasp domain is found at 9-244 (KELLRQYGVA…LDEEDPKEIE (236 aa)). ATP-binding positions include K46, 53 to 55 (GRG), E99, C102, and E107. Mg(2+) is bound by residues N199 and D213. Residues N264 and 321 to 323 (GIM) each bind substrate.

It belongs to the succinate/malate CoA ligase beta subunit family. As to quaternary structure, heterotetramer of two alpha and two beta subunits. Requires Mg(2+) as cofactor.

The enzyme catalyses succinate + ATP + CoA = succinyl-CoA + ADP + phosphate. The catalysed reaction is GTP + succinate + CoA = succinyl-CoA + GDP + phosphate. It participates in carbohydrate metabolism; tricarboxylic acid cycle; succinate from succinyl-CoA (ligase route): step 1/1. Succinyl-CoA synthetase functions in the citric acid cycle (TCA), coupling the hydrolysis of succinyl-CoA to the synthesis of either ATP or GTP and thus represents the only step of substrate-level phosphorylation in the TCA. The beta subunit provides nucleotide specificity of the enzyme and binds the substrate succinate, while the binding sites for coenzyme A and phosphate are found in the alpha subunit. The chain is Succinate--CoA ligase [ADP-forming] subunit beta from Halalkalibacterium halodurans (strain ATCC BAA-125 / DSM 18197 / FERM 7344 / JCM 9153 / C-125) (Bacillus halodurans).